The chain runs to 89 residues: Small ribosomal subunit protein uS15 (89 aa).

A compositionally biased stretch (polar residues) spans 1 to 10 (MAVTTDQKSQ). A disordered region spans residues 1–22 (MAVTTDQKSQVMRDYQRAAGDT).

It belongs to the universal ribosomal protein uS15 family. In terms of assembly, part of the 30S ribosomal subunit. Forms a bridge to the 50S subunit in the 70S ribosome, contacting the 23S rRNA.

One of the primary rRNA binding proteins, it binds directly to 16S rRNA where it helps nucleate assembly of the platform of the 30S subunit by binding and bridging several RNA helices of the 16S rRNA. Its function is as follows. Forms an intersubunit bridge (bridge B4) with the 23S rRNA of the 50S subunit in the ribosome. The protein is Small ribosomal subunit protein uS15 of Nitrosomonas europaea (strain ATCC 19718 / CIP 103999 / KCTC 2705 / NBRC 14298).